The primary structure comprises 684 residues: Glycine--tRNA ligase beta subunit (684 aa).

It belongs to the class-II aminoacyl-tRNA synthetase family. In terms of assembly, tetramer of two alpha and two beta subunits.

The protein resides in the cytoplasm. It carries out the reaction tRNA(Gly) + glycine + ATP = glycyl-tRNA(Gly) + AMP + diphosphate. This is Glycine--tRNA ligase beta subunit from Pseudomonas fluorescens (strain ATCC BAA-477 / NRRL B-23932 / Pf-5).